Here is a 266-residue protein sequence, read N- to C-terminus: Lectin 7 (266 aa).

A signal peptide spans 1 to 27 (MAINTSRTQILFITIISFLILAQNVNS). N-linked (GlcNAc...) asparagine glycans are attached at residues N121, N205, and N219.

It belongs to the leguminous lectin family.

May be involved in arbuscular mycorrhizal (AM) symbiosis with AM fungi. This Medicago truncatula (Barrel medic) protein is Lectin 7.